An 899-amino-acid polypeptide reads, in one-letter code: Bifunctional uridylyltransferase/uridylyl-removing enzyme (899 aa).

Residues 1-342 (MPQVDPDLFD…PGDAAGRVEP (342 aa)) are uridylyltransferase. The uridylyl-removing stretch occupies residues 343-705 (LNERFQVRDG…TTQREFEGAT (363 aa)). The HD domain occupies 461-583 (VDAHTLNLIK…VRDQTYLDYL (123 aa)). ACT domains lie at 706-789 (QIFI…IIQR) and 816-899 (ILEI…RISI).

This sequence belongs to the GlnD family. The cofactor is Mg(2+).

It carries out the reaction [protein-PII]-L-tyrosine + UTP = [protein-PII]-uridylyl-L-tyrosine + diphosphate. The enzyme catalyses [protein-PII]-uridylyl-L-tyrosine + H2O = [protein-PII]-L-tyrosine + UMP + H(+). Its activity is regulated as follows. Uridylyltransferase (UTase) activity is inhibited by glutamine, while glutamine activates uridylyl-removing (UR) activity. Modifies, by uridylylation and deuridylylation, the PII regulatory proteins (GlnB and homologs), in response to the nitrogen status of the cell that GlnD senses through the glutamine level. Under low glutamine levels, catalyzes the conversion of the PII proteins and UTP to PII-UMP and PPi, while under higher glutamine levels, GlnD hydrolyzes PII-UMP to PII and UMP (deuridylylation). Thus, controls uridylylation state and activity of the PII proteins, and plays an important role in the regulation of nitrogen fixation and metabolism. This chain is Bifunctional uridylyltransferase/uridylyl-removing enzyme, found in Azotobacter vinelandii (strain DJ / ATCC BAA-1303).